The sequence spans 313 residues: Glutathione synthetase (313 aa).

The ATP-grasp domain occupies 125-309 (KLFVMDFTEL…IAAKIWDVIE (185 aa)). 151-207 (RAEHGAVVMKPLHGHGGAAVFRVLPQDINFGSLYDMFAVTFREPWVIQRFLPEVKHG) lines the ATP pocket. Mg(2+) is bound by residues E280 and N282.

The protein belongs to the prokaryotic GSH synthase family. Mg(2+) is required as a cofactor. Requires Mn(2+) as cofactor.

The enzyme catalyses gamma-L-glutamyl-L-cysteine + glycine + ATP = glutathione + ADP + phosphate + H(+). The protein operates within sulfur metabolism; glutathione biosynthesis; glutathione from L-cysteine and L-glutamate: step 2/2. In Rhodopseudomonas palustris (strain ATCC BAA-98 / CGA009), this protein is Glutathione synthetase.